The primary structure comprises 451 residues: Gamma-aminobutyric acid receptor subunit alpha-2 (451 aa).

Residues 1 to 28 form the signal peptide; sequence MKTKLNIYNMQFLLFVFLVWDPARLVLA. Residues 29 to 249 lie on the Extracellular side of the membrane; sequence NIQEDEAKNN…MTAHFHLKRK (221 aa). Residue N38 is glycosylated (N-linked (GlcNAc...) asparagine). R94 contacts 4-aminobutanoate. A glycan (N-linked (GlcNAc...) asparagine) is linked at N138. A 4-aminobutanoate-binding site is contributed by T157. C166 and C180 form a disulfide bridge. A helical membrane pass occupies residues 250–270; that stretch reads IGYFVIQTYLPCIMTVILSQV. The Cytoplasmic segment spans residues 271–280; it reads SFWLNRESVP. A helical transmembrane segment spans residues 281 to 300; sequence ARTVFGVTTVLTMTTLSISA. Topologically, residues 301 to 311 are extracellular; the sequence is RNSLPKVAYAT. The helical transmembrane segment at 312–332 threads the bilayer; it reads AMDWFIAVCYAFVFSALIEFA. Residues 333-420 lie on the Cytoplasmic side of the membrane; that stretch reads TVNYFTKRGW…FNSVSKIDRM (88 aa). The chain crosses the membrane as a helical span at residues 421 to 441; it reads SRIVFPVLFGTFNLVYWATYL. At 442–451 the chain is on the extracellular side; the sequence is NREPVLGVSP.

This sequence belongs to the ligand-gated ion channel (TC 1.A.9) family. Gamma-aminobutyric acid receptor (TC 1.A.9.5) subfamily. GABRA2 sub-subfamily. In terms of assembly, heteropentamer, formed by a combination of alpha (GABRA1-6), beta (GABRB1-3), gamma (GABRG1-3), delta (GABRD), epsilon (GABRE), rho (GABRR1-3), pi (GABRP) and theta (GABRQ) subunits, each subunit exhibiting distinct physiological and pharmacological properties. Interacts with UBQLN1. Interacts with KIF21B. Interacts with LHFPL4. Interacts with SHISA7; interaction leads to the regulation of GABA(A) receptor trafficking, channel deactivation kinetics and pharmacology. In terms of processing, glycosylated.

The protein localises to the postsynaptic cell membrane. Its subcellular location is the cell membrane. It localises to the cytoplasmic vesicle membrane. The protein resides in the cell projection. It is found in the dendrite. It carries out the reaction chloride(in) = chloride(out). With respect to regulation, activated by pentobarbital. Inhibited by the antagonist bicuculline. Functionally, alpha subunit of the heteropentameric ligand-gated chloride channel gated by gamma-aminobutyric acid (GABA), a major inhibitory neurotransmitter in the brain. GABA-gated chloride channels, also named GABA(A) receptors (GABAAR), consist of five subunits arranged around a central pore and contain GABA active binding site(s) located at the alpha and beta subunit interfaces. When activated by GABA, GABAARs selectively allow the flow of chloride anions across the cell membrane down their electrochemical gradient. Chloride influx into the postsynaptic neuron following GABAAR opening decreases the neuron ability to generate a new action potential, thereby reducing nerve transmission. The alpha-2 subunit exhibits synaptogenic activity together with beta-2 and very little to no activity together with beta-3, the gamma-2 subunit being necessary but not sufficient to induce rapid synaptic contacts formation. This is Gamma-aminobutyric acid receptor subunit alpha-2 from Homo sapiens (Human).